Consider the following 152-residue polypeptide: Large ribosomal subunit protein uL15 (152 aa).

Positions 1–79 (MRLNELSPPP…GRHTPAHPKV (79 aa)) are disordered. Over residues 22 to 35 (GEGSGYGKTSGRGQ) the composition is skewed to gly residues.

The protein belongs to the universal ribosomal protein uL15 family. As to quaternary structure, part of the 50S ribosomal subunit.

Binds to the 23S rRNA. The chain is Large ribosomal subunit protein uL15 from Rubrobacter xylanophilus (strain DSM 9941 / JCM 11954 / NBRC 16129 / PRD-1).